Consider the following 396-residue polypeptide: L-lactate dehydrogenase (396 aa).

Positions 1 to 380 constitute an FMN hydroxy acid dehydrogenase domain; sequence MIISAASDYR…TQDSLVQVLG (380 aa). Tyr24 serves as a coordination point for substrate. Residues Ser106 and Gln127 each coordinate FMN. Substrate is bound at residue Tyr129. Thr155 is a binding site for FMN. Arg164 is a binding site for substrate. Residue Lys251 participates in FMN binding. His275 acts as the Proton acceptor in catalysis. Arg278 serves as a coordination point for substrate. 306 to 330 is an FMN binding site; it reads DSGIRNGLDVVRMIALGADTVLLGR.

It belongs to the FMN-dependent alpha-hydroxy acid dehydrogenase family. FMN is required as a cofactor.

It is found in the cell inner membrane. The catalysed reaction is (S)-lactate + A = pyruvate + AH2. In terms of biological role, catalyzes the conversion of L-lactate to pyruvate. Is coupled to the respiratory chain. This chain is L-lactate dehydrogenase, found in Escherichia coli O1:K1 / APEC.